Reading from the N-terminus, the 364-residue chain is D-alanine--D-alanine ligase A (364 aa).

The ATP-grasp domain maps to 145 to 348 (KRLLRDAGLN…YTDLISRLIE (204 aa)). ATP is bound at residue 175–230 (ESRLGLPLFVKPANQGSSVGVSKVANEAQYQQAVALAFEFDHKVVVEQGIKGREIE). Mg(2+) contacts are provided by Asp-302, Glu-315, and Asn-317.

This sequence belongs to the D-alanine--D-alanine ligase family. Requires Mg(2+) as cofactor. Mn(2+) serves as cofactor.

The protein resides in the cytoplasm. It carries out the reaction 2 D-alanine + ATP = D-alanyl-D-alanine + ADP + phosphate + H(+). It functions in the pathway cell wall biogenesis; peptidoglycan biosynthesis. Cell wall formation. The sequence is that of D-alanine--D-alanine ligase A (ddlA) from Salmonella typhi.